The primary structure comprises 97 residues: uncharacterized protein (97 aa).

The tract at residues Ser58–Ser97 is disordered.

This is an uncharacterized protein from Homo sapiens (Human).